The sequence spans 602 residues: Elongation factor 4 (602 aa).

A tr-type G domain is found at 8–189 (KNIRNFSIIA…KIITTIPAPS (182 aa)). GTP contacts are provided by residues 20-25 (DHGKST) and 136-139 (NKID).

Belongs to the TRAFAC class translation factor GTPase superfamily. Classic translation factor GTPase family. LepA subfamily.

Its subcellular location is the cell inner membrane. It carries out the reaction GTP + H2O = GDP + phosphate + H(+). In terms of biological role, required for accurate and efficient protein synthesis under certain stress conditions. May act as a fidelity factor of the translation reaction, by catalyzing a one-codon backward translocation of tRNAs on improperly translocated ribosomes. Back-translocation proceeds from a post-translocation (POST) complex to a pre-translocation (PRE) complex, thus giving elongation factor G a second chance to translocate the tRNAs correctly. Binds to ribosomes in a GTP-dependent manner. This chain is Elongation factor 4, found in Helicobacter pylori (strain ATCC 700392 / 26695) (Campylobacter pylori).